The following is a 1403-amino-acid chain: Perilipin-4 (1403 aa).

The disordered stretch occupies residues Met1–Ser21. A phosphoserine mark is found at Ser25 and Ser31. Residues Arg33–Met70 form a disordered region. Repeat copies occupy residues Gly104–Gly136, Gly137–Thr169, Gly170–Thr202, Gly203–Thr235, Gly236–Thr268, Gly269–Ala301, Gly302–Thr334, Gly335–Thr367, Gly368–Ala400, Gly401–Thr433, Gly434–Thr466, Gly467–Thr499, Gly500–Thr532, Gly533–Ala565, Gly566–Thr598, Gly599–Thr631, Gly632–Thr664, Gly665–Ala697, Gly698–Thr730, Gly731–Thr763, Gly764–Ala796, Gly797–Thr829, Gly830–Thr862, Gly863–Ala895, Gly896–Thr928, Gly929–Thr961, Gly962–Ala994, Gly995–Gly1027, and Thr1028–Gly1060. The interval Gly104–Gly1060 is 29 X 33 AA approximate tandem repeat. Ser1281 is subject to Phosphoserine. Phosphothreonine is present on Thr1287.

Belongs to the perilipin family. Specifically expressed in white adipose tissue and also weakly detected in heart and skeletal muscle (at protein level).

The protein localises to the cell membrane. The protein resides in the cytoplasm. It is found in the lipid droplet. Its function is as follows. May play a role in triacylglycerol packaging into adipocytes. May function as a coat protein involved in the biogenesis of lipid droplets. In Mus musculus (Mouse), this protein is Perilipin-4 (Plin4).